Reading from the N-terminus, the 163-residue chain is Putative pre-16S rRNA nuclease (163 aa).

It belongs to the YqgF nuclease family.

It localises to the cytoplasm. Functionally, could be a nuclease involved in processing of the 5'-end of pre-16S rRNA. This Nitrobacter hamburgensis (strain DSM 10229 / NCIMB 13809 / X14) protein is Putative pre-16S rRNA nuclease.